The sequence spans 221 residues: 7-cyano-7-deazaguanine synthase (221 aa).

10 to 20 (LSGGLDSTTCM) lines the ATP pocket. Zn(2+)-binding residues include Cys-188, Cys-196, Cys-199, and Cys-202.

This sequence belongs to the QueC family. Homodimer. The cofactor is Zn(2+).

The catalysed reaction is 7-carboxy-7-deazaguanine + NH4(+) + ATP = 7-cyano-7-deazaguanine + ADP + phosphate + H2O + H(+). Its pathway is purine metabolism; 7-cyano-7-deazaguanine biosynthesis. Functionally, catalyzes the ATP-dependent conversion of 7-carboxy-7-deazaguanine (CDG) to 7-cyano-7-deazaguanine (preQ(0)). The polypeptide is 7-cyano-7-deazaguanine synthase (Oceanobacillus iheyensis (strain DSM 14371 / CIP 107618 / JCM 11309 / KCTC 3954 / HTE831)).